Here is a 451-residue protein sequence, read N- to C-terminus: Protein-tyrosine kinase 6 (451 aa).

Residues 8–72 (HLGPKYVGLW…PHNYLAEKET (65 aa)) form the SH3 domain. Phosphotyrosine is present on residues Tyr13, Tyr61, Tyr66, and Tyr114. Positions 78–170 (WFFGCISRSE…SHGLQLSMPC (93 aa)) constitute an SH2 domain. The segment at 171–190 (WKHKTEPLPHWDDWERPREE) is linker. Positions 191-445 (FTLCKKLGAG…DLCEKLTGIT (255 aa)) constitute a Protein kinase domain. Residues 197–205 (LGAGYFGEV) and Lys219 contribute to the ATP site. Asp312 (proton acceptor) is an active-site residue. Tyr342 carries the phosphotyrosine; by autocatalysis modification. Residues Tyr351 and Tyr447 each carry the phosphotyrosine modification.

This sequence belongs to the protein kinase superfamily. Tyr protein kinase family. BRK/PTK6/SIK subfamily. As to quaternary structure, interacts with KHDRBS1. Interacts with phosphorylated IRS4. Interacts with GAP-A.p65. Interacts with ADAM15. Interacts (via SH3 and SH2 domains) with phosphorylated IRS4. Interacts (via SH3 domain) with SFPQ. Interacts with EGFR and ERBB2. Interacts with STAP2. Interacts with PNX. Interacts with SFPQ. Interacts with PTK/ATK. Interacts with CTNNB1. In terms of processing, autophosphorylated. Autophosphorylation of Tyr-342 leads to an increase of kinase activity. Tyr-447 binds to the SH2 domain when phosphorylated and negatively regulates kinase activity. In terms of tissue distribution, expressed only in epithelial tissues, including the skin and lining of the alimentary canal. Restricted to the cell layers immediately above the proliferative cell zone in these epithelia.

The protein resides in the cytoplasm. Its subcellular location is the nucleus. The protein localises to the membrane. It localises to the cell projection. It is found in the ruffle. The enzyme catalyses L-tyrosyl-[protein] + ATP = O-phospho-L-tyrosyl-[protein] + ADP + H(+). Activated by EGF, NRG1 and IGF1. Inhibited by SOCS3 to phosphorylate STAT3. Stabilized in the inactive form by an association between the SH3 domain and the SH2-TK linker region. Interaction between Trp-184 within SH2-TK linker region and the catalytic domain appears essential for positive regulation of kinase activity. Functionally, non-receptor tyrosine-protein kinase implicated in the regulation of a variety of signaling pathways that control the differentiation and maintenance of normal epithelia, as well as tumor growth. Function seems to be context dependent and differ depending on cell type, as well as its intracellular localization. A number of potential nuclear and cytoplasmic substrates have been identified. These include the RNA-binding proteins: KHDRBS1/SAM68, KHDRBS2/SLM1, KHDRBS3/SLM2 and SFPQ/PSF; transcription factors: STAT3 and STAT5A/B and a variety of signaling molecules: ARHGAP35/p190RhoGAP, PXN/paxillin, BTK/ATK, STAP2/BKS. Phosphorylates the GTPase-activating protein ARAP1 following EGF stimulation which enhances EGFR signaling by delaying EGFR down-regulation. Also associates with a variety of proteins that are likely upstream of PTK6 in various signaling pathways, or for which PTK6 may play an adapter-like role. These proteins include ADAM15, EGFR, ERBB2, ERBB3 and IRS4. In normal or non-tumorigenic tissues, PTK6 promotes cellular differentiation and apoptosis. In tumors PTK6 contributes to cancer progression by sensitizing cells to mitogenic signals and enhancing proliferation, anchorage-independent survival and migration/invasion. Association with EGFR, ERBB2, ERBB3 may contribute to mammary tumor development and growth through enhancement of EGF-induced signaling via BTK/AKT and PI3 kinase. Contributes to migration and proliferation by contributing to EGF-mediated phosphorylation of ARHGAP35/p190RhoGAP, which promotes association with RASA1/p120RasGAP, inactivating RhoA while activating RAS. EGF stimulation resulted in phosphorylation of PNX/Paxillin by PTK6 and activation of RAC1 via CRK/CrKII, thereby promoting migration and invasion. PTK6 activates STAT3 and STAT5B to promote proliferation. Nuclear PTK6 may be important for regulating growth in normal epithelia, while cytoplasmic PTK6 might activate oncogenic signaling pathways. This Mus musculus (Mouse) protein is Protein-tyrosine kinase 6 (Ptk6).